We begin with the raw amino-acid sequence, 190 residues long: Nascent polypeptide-associated complex subunit alpha (190 aa).

Disordered stretches follow at residues 20-42 (FDSD…AERK) and 123-155 (SLQN…VDAK). A compositionally biased stretch (basic and acidic residues) spans 30-40 (HASDKVASRAE). In terms of domain architecture, NAC-A/B spans 37 to 102 (SRAERKSRKA…AKAEDMSQLA (66 aa)). Positions 138–151 (EEEEDDDSPIDEEG) are enriched in acidic residues. A UBA domain is found at 152 to 189 (VDAKDIDLVMQQVSCSRRKAVKALKESNGDLINAIMNA).

The protein belongs to the NAC-alpha family. As to quaternary structure, part of the nascent polypeptide-associated complex (NAC), consisting of EGD2 and EGD1. NAC associates with ribosomes via EGD1.

It is found in the cytoplasm. Its subcellular location is the nucleus. Functionally, component of the nascent polypeptide-associated complex (NAC), a dynamic component of the ribosomal exit tunnel, protecting the emerging polypeptides from interaction with other cytoplasmic proteins to ensure appropriate nascent protein targeting. The NAC complex also promotes mitochondrial protein import by enhancing productive ribosome interactions with the outer mitochondrial membrane and blocks the inappropriate interaction of ribosomes translating non-secretory nascent polypeptides with translocation sites in the membrane of the endoplasmic reticulum. EGD2 may also be involved in transcription regulation. This Mycosarcoma maydis (Corn smut fungus) protein is Nascent polypeptide-associated complex subunit alpha (EGD2).